A 513-amino-acid chain; its full sequence is Cytochrome P450 1A2 (513 aa).

S68 is a glycosylation site (O-linked (GlcNAc) serine). Residue F225 coordinates substrate. C456 contacts heme.

It belongs to the cytochrome P450 family. As to quaternary structure, interacts with PGRMC1; the interaction requires PGRMC1 homodimerization. Requires heme as cofactor. As to expression, found in lung and liver.

It is found in the endoplasmic reticulum membrane. The protein resides in the microsome membrane. The catalysed reaction is an organic molecule + reduced [NADPH--hemoprotein reductase] + O2 = an alcohol + oxidized [NADPH--hemoprotein reductase] + H2O + H(+). It carries out the reaction 17beta-estradiol + reduced [NADPH--hemoprotein reductase] + O2 = 2-hydroxy-17beta-estradiol + oxidized [NADPH--hemoprotein reductase] + H2O + H(+). The enzyme catalyses 17beta-estradiol + reduced [NADPH--hemoprotein reductase] + O2 = 4-hydroxy-17beta-estradiol + oxidized [NADPH--hemoprotein reductase] + H2O + H(+). It catalyses the reaction estrone + reduced [NADPH--hemoprotein reductase] + O2 = 2-hydroxyestrone + oxidized [NADPH--hemoprotein reductase] + H2O + H(+). The catalysed reaction is estrone + reduced [NADPH--hemoprotein reductase] + O2 = 4-hydroxyestrone + oxidized [NADPH--hemoprotein reductase] + H2O + H(+). It carries out the reaction cholesterol + reduced [NADPH--hemoprotein reductase] + O2 = 25-hydroxycholesterol + oxidized [NADPH--hemoprotein reductase] + H2O + H(+). The enzyme catalyses all-trans-retinol + reduced [NADPH--hemoprotein reductase] + O2 = all-trans-retinal + oxidized [NADPH--hemoprotein reductase] + 2 H2O + H(+). It catalyses the reaction all-trans-retinal + reduced [NADPH--hemoprotein reductase] + O2 = all-trans-retinoate + oxidized [NADPH--hemoprotein reductase] + H2O + 2 H(+). The catalysed reaction is (5Z,8Z,11Z,14Z)-eicosatetraenoate + reduced [NADPH--hemoprotein reductase] + O2 = (14R,15S)-epoxy-(5Z,8Z,11Z)-eicosatrienoate + oxidized [NADPH--hemoprotein reductase] + H2O + H(+). It carries out the reaction (5Z,8Z,11Z,14Z)-eicosatetraenoate + reduced [NADPH--hemoprotein reductase] + O2 = (14S,15R)-epoxy-(5Z,8Z,11Z)-eicosatrienoate + oxidized [NADPH--hemoprotein reductase] + H2O + H(+). The enzyme catalyses (5Z,8Z,11Z,14Z,17Z)-eicosapentaenoate + reduced [NADPH--hemoprotein reductase] + O2 = (17R,18S)-epoxy-(5Z,8Z,11Z,14Z)-eicosatetraenoate + oxidized [NADPH--hemoprotein reductase] + H2O + H(+). It catalyses the reaction (4Z,7Z,10Z,13Z,16Z,19Z)-docosahexaenoate + reduced [NADPH--hemoprotein reductase] + O2 = (19R,20S)-epoxy-(4Z,7Z,10Z,13Z,16Z)-docosapentaenoate + oxidized [NADPH--hemoprotein reductase] + H2O + H(+). The catalysed reaction is (5S)-hydroperoxy-(6E,8Z,11Z,14Z)-eicosatetraenoate = 5-oxo-(6E,8Z,11Z,14Z)-eicosatetraenoate + H2O. It carries out the reaction (12S)-hydroperoxy-(5Z,8Z,10E,14Z)-eicosatetraenoate = 12-oxo-(5Z,8Z,10E,14Z)-eicosatetraenoate + H2O. The enzyme catalyses (15S)-hydroperoxy-(5Z,8Z,11Z,13E)-eicosatetraenoate = 15-oxo-(5Z,8Z,11Z,13E)-eicosatetraenoate + H2O. It catalyses the reaction (13S)-hydroperoxy-(9Z,11E)-octadecadienoate = 13-oxo-(9Z,11E)-octadecadienoate + H2O. The catalysed reaction is (5Z,8Z,11Z,14Z)-eicosatetraenoate + reduced [NADPH--hemoprotein reductase] + O2 = 13-hydroxy-(5Z,8Z,11Z,14Z)-eicosatetraenoate + oxidized [NADPH--hemoprotein reductase] + H2O + H(+). It carries out the reaction (5Z,8Z,11Z,14Z)-eicosatetraenoate + reduced [NADPH--hemoprotein reductase] + O2 = 19-hydroxy-(5Z,8Z,11Z,14Z)-eicosatetraenoate + oxidized [NADPH--hemoprotein reductase] + H2O + H(+). The enzyme catalyses (9Z,12Z)-octadecadienoate + reduced [NADPH--hemoprotein reductase] + O2 = 11-hydroxy-(9Z,12Z)-octadecadienoate + oxidized [NADPH--hemoprotein reductase] + H2O + H(+). It functions in the pathway cofactor metabolism; retinol metabolism. The protein operates within steroid metabolism; cholesterol metabolism. Its pathway is lipid metabolism; arachidonate metabolism. A cytochrome P450 monooxygenase involved in the metabolism of various endogenous substrates, including fatty acids, steroid hormones and vitamins. Mechanistically, uses molecular oxygen inserting one oxygen atom into a substrate, and reducing the second into a water molecule, with two electrons provided by NADPH via cytochrome P450 reductase (NADPH--hemoprotein reductase). Catalyzes the hydroxylation of carbon-hydrogen bonds. Exhibits high catalytic activity for the formation of hydroxyestrogens from estrone (E1) and 17beta-estradiol (E2), namely 2-hydroxy E1 and E2. Metabolizes cholesterol toward 25-hydroxycholesterol, a physiological regulator of cellular cholesterol homeostasis. May act as a major enzyme for all-trans retinoic acid biosynthesis in the liver. Catalyzes two successive oxidative transformation of all-trans retinol to all-trans retinal and then to the active form all-trans retinoic acid. Primarily catalyzes stereoselective epoxidation of the last double bond of polyunsaturated fatty acids (PUFA), displaying a strong preference for the (R,S) stereoisomer. Catalyzes bisallylic hydroxylation and omega-1 hydroxylation of PUFA. May also participate in eicosanoids metabolism by converting hydroperoxide species into oxo metabolites (lipoxygenase-like reaction, NADPH-independent). Plays a role in the oxidative metabolism of xenobiotics. Catalyzes the N-hydroxylation of heterocyclic amines and the O-deethylation of phenacetin. Metabolizes caffeine via N3-demethylation. This chain is Cytochrome P450 1A2 (CYP1A2), found in Mesocricetus auratus (Golden hamster).